The following is a 347-amino-acid chain: 4-hydroxyproline 2-epimerase (347 aa).

Gln-85 provides a ligand contact to substrate. Ser-93 functions as the Proton acceptor in the catalytic mechanism. Residues 94–95 (GS) and Asp-251 contribute to the substrate site. Catalysis depends on Cys-255, which acts as the Proton donor. 256–257 (GT) provides a ligand contact to substrate.

Belongs to the proline racemase family.

The catalysed reaction is trans-4-hydroxy-L-proline = cis-4-hydroxy-D-proline. Catalyzes the epimerization of trans-4-hydroxy-L-proline (t4LHyp) to cis-4-hydroxy-D-proline (c4DHyp). May be involved in a degradation pathway of t4LHyp. Can also catalyze the epimerization of trans-3-hydroxy-L-proline (t3LHyp) to cis-3-hydroxy-D-proline (c3DHyp) in vitro. Displays no proline racemase activity. The sequence is that of 4-hydroxyproline 2-epimerase from Allorhizobium ampelinum (strain ATCC BAA-846 / DSM 112012 / S4) (Agrobacterium vitis (strain S4)).